The following is a 607-amino-acid chain: Elongation factor 4 (607 aa).

Residues 11-193 (ENIRNFSIIA…KIVEVVPAPD (183 aa)) form the tr-type G domain. Residues 23 to 28 (DHGKST) and 140 to 143 (NKID) each bind GTP.

Belongs to the TRAFAC class translation factor GTPase superfamily. Classic translation factor GTPase family. LepA subfamily.

It localises to the cell membrane. The enzyme catalyses GTP + H2O = GDP + phosphate + H(+). Required for accurate and efficient protein synthesis under certain stress conditions. May act as a fidelity factor of the translation reaction, by catalyzing a one-codon backward translocation of tRNAs on improperly translocated ribosomes. Back-translocation proceeds from a post-translocation (POST) complex to a pre-translocation (PRE) complex, thus giving elongation factor G a second chance to translocate the tRNAs correctly. Binds to ribosomes in a GTP-dependent manner. This Staphylococcus aureus (strain MW2) protein is Elongation factor 4.